Reading from the N-terminus, the 234-residue chain is Chalcone--flavanone isomerase 2 (234 aa).

Substrate-binding residues include Thr-50, Asn-115, and Ser-192.

Belongs to the chalcone isomerase family.

It carries out the reaction a chalcone = a flavanone.. It functions in the pathway secondary metabolite biosynthesis; flavonoid biosynthesis. Catalyzes the intramolecular cyclization of bicyclic chalcones into tricyclic (S)-flavanones. Responsible for the isomerization of 4,2',4',6'-tetrahydroxychalcone (also termed chalcone) into naringenin. The sequence is that of Chalcone--flavanone isomerase 2 (CHI2) from Vitis vinifera (Grape).